Consider the following 192-residue polypeptide: Erythropoietin (192 aa).

The first 25 residues, 1–25, serve as a signal peptide directing secretion; sequence MGARDCTPLLMLSFLLFPLGFPVLG. Intrachain disulfides connect Cys32-Cys187 and Cys54-Cys58. Residue Asn49 is glycosylated (N-linked (GlcNAc...) asparagine). N-linked (GlcNAc...) asparagine glycans are attached at residues Asn63 and Asn108.

It belongs to the EPO/TPO family. In terms of tissue distribution, produced by kidney or liver of adult mammals and by liver of fetal or neonatal mammals.

The protein resides in the secreted. Its function is as follows. Hormone involved in the regulation of erythrocyte proliferation and differentiation and the maintenance of a physiological level of circulating erythrocyte mass. Binds to EPOR leading to EPOR dimerization and JAK2 activation thereby activating specific downstream effectors, including STAT1 and STAT3. This chain is Erythropoietin (EPO), found in Bos taurus (Bovine).